The sequence spans 378 residues: Putative aminoglycoside phosphotransferase (378 aa).

ATP is bound by residues Arg79 and 134–136 (DYV). The active-site Proton acceptor is the Asp249. Mg(2+) contacts are provided by Asn254, Asp267, and Glu269.

The protein belongs to the aminoglycoside phosphotransferase family.

Might catalyze the phosphorylation of aminoglycosides and confer aminoglycoside antibiotics resistance. The chain is Putative aminoglycoside phosphotransferase from Mycobacterium tuberculosis (strain CDC 1551 / Oshkosh).